The primary structure comprises 595 residues: Pyranose dehydrogenase (595 aa).

A signal peptide spans Met1 to Ser21. Residues Asn95 and Asn110 are each glycosylated (N-linked (GlcNAc...) asparagine). Tele-8alpha-FAD histidine is present on His123. N-linked (GlcNAc...) asparagine glycosylation is found at Asn195, Asn337, Asn367, Asn502, and Asn510. His530 serves as the catalytic Proton acceptor. The N-linked (GlcNAc...) asparagine glycan is linked to Asn541. His574 is a catalytic residue.

This sequence belongs to the GMC oxidoreductase family. As to quaternary structure, monomer. FAD is required as a cofactor. N-glycosylated.

The protein localises to the secreted. It carries out the reaction pyranose + acceptor = pyranos-2-ulose + reduced acceptor.. The catalysed reaction is pyranose + acceptor = pyranos-3-ulose + reduced acceptor.. The enzyme catalyses pyranose + acceptor = pyranos-2,3-diulose + reduced acceptor.. It catalyses the reaction a pyranoside + acceptor = a pyranosid-3-ulose + reduced acceptor.. It carries out the reaction a pyranoside + acceptor = a pyranosid-3,4-diulose + reduced acceptor.. In terms of biological role, catalyzes the single-oxidation or sequential double oxidation reaction of carbohydrates primarily at carbon-2 and/or carbon-3 with the concomitant reduction of the flavin. The enzyme exhibits a broad sugar substrate specificity, oxidizing different aldopyranoses to the corresponding C-1, C-2, C-3 or C-1,2, C-2,3 and C-3,4 (di)dehydro sugars with substrate-specific regioselectivity. Accepts only a narrow range of electron acceptors such as substituted benzoquinones and complexed metal ions and reacts extremely slowly with O(2) as acceptor. May play a role in the natural recycling of plant matter by oxidizing all major monosaccharides in lignocellulose and by reducing quinone compounds or reactive radical species generated during lignin depolymerization. The polypeptide is Pyranose dehydrogenase (Agaricus campestris (Field mushroom)).